Consider the following 134-residue polypeptide: ATP synthase epsilon chain, chloroplastic (134 aa).

The protein belongs to the ATPase epsilon chain family. In terms of assembly, F-type ATPases have 2 components, CF(1) - the catalytic core - and CF(0) - the membrane proton channel. CF(1) has five subunits: alpha(3), beta(3), gamma(1), delta(1), epsilon(1). CF(0) has three main subunits: a, b and c.

It is found in the plastid. It localises to the chloroplast thylakoid membrane. Functionally, produces ATP from ADP in the presence of a proton gradient across the membrane. This is ATP synthase epsilon chain, chloroplastic from Amborella trichopoda.